A 387-amino-acid polypeptide reads, in one-letter code: Prostatic acid phosphatase (387 aa).

Residues 1–34 (MRNAALLMTRATSLRLSLLLLLSFLPDLDGGVRA) form the signal peptide. Substrate is bound at residue R45. H46 functions as the Nucleophile in the catalytic mechanism. Position 49 (R49) interacts with substrate. N-linked (GlcNAc...) asparagine glycosylation occurs at N96. R113 is a substrate binding site. 3 disulfide bridges follow: C163–C374, C217–C315, and C349–C353. N222 is a glycosylation site (N-linked (GlcNAc...) asparagine). H291 provides a ligand contact to substrate. The active-site Proton donor is D292. N-linked (GlcNAc...) asparagine glycosylation is present at N335.

It belongs to the histidine acid phosphatase family. As to quaternary structure, homodimer; dimer formation is required for phosphatase activity.

The protein localises to the secreted. The catalysed reaction is a phosphate monoester + H2O = an alcohol + phosphate. The enzyme catalyses 1-(9Z-octadecenoyl)-sn-glycero-3-phosphate + H2O = 1-(9Z-octadecenoyl)-sn-glycerol + phosphate. It catalyses the reaction O-phospho-L-tyrosyl-[protein] + H2O = L-tyrosyl-[protein] + phosphate. Its function is as follows. A non-specific tyrosine phosphatase that dephosphorylates a diverse number of substrates under acidic conditions (pH 4-6) including alkyl, aryl, and acyl orthophosphate monoesters and phosphorylated proteins. Has lipid phosphatase activity and inactivates lysophosphatidic acid in seminal plasma. This Bos taurus (Bovine) protein is Prostatic acid phosphatase (ACP3).